The sequence spans 78 residues: Toxin OAIP 5 (78 aa).

The signal sequence occupies residues 1-19 (MLIVILTCALLVIYHAAAA). A propeptide spanning residues 20-40 (EELEAKDVIESKALATLDEER) is cleaved from the precursor. 3 disulfides stabilise this stretch: cysteine 43–cysteine 56, cysteine 47–cysteine 70, and cysteine 64–cysteine 75.

This sequence belongs to the neurotoxin 12 (Hwtx-2) family. 05 (OAIP-5) subfamily. Expressed by the venom gland.

It localises to the secreted. Probable ion channel inhibitor. Shows insecticidal activity when injected into mealworms. This is Toxin OAIP 5 from Selenotypus plumipes (Australian featherleg tarantula).